Here is a 216-residue protein sequence, read N- to C-terminus: Orotate phosphoribosyltransferase (216 aa).

Residues Arg101, Lys105, His107, and Glu127 to Ser135 contribute to the 5-phospho-alpha-D-ribose 1-diphosphate site. Ser131 lines the orotate pocket.

It belongs to the purine/pyrimidine phosphoribosyltransferase family. PyrE subfamily. Homodimer. The cofactor is Mg(2+).

The enzyme catalyses orotidine 5'-phosphate + diphosphate = orotate + 5-phospho-alpha-D-ribose 1-diphosphate. It participates in pyrimidine metabolism; UMP biosynthesis via de novo pathway; UMP from orotate: step 1/2. Catalyzes the transfer of a ribosyl phosphate group from 5-phosphoribose 1-diphosphate to orotate, leading to the formation of orotidine monophosphate (OMP). This chain is Orotate phosphoribosyltransferase, found in Cutibacterium acnes (strain DSM 16379 / KPA171202) (Propionibacterium acnes).